Reading from the N-terminus, the 169-residue chain is Ribosomal RNA large subunit methyltransferase H (169 aa).

S-adenosyl-L-methionine contacts are provided by residues Leu-85, Gly-117, and 136–141 (LGELTW).

Belongs to the RNA methyltransferase RlmH family. Homodimer.

Its subcellular location is the cytoplasm. It catalyses the reaction pseudouridine(1915) in 23S rRNA + S-adenosyl-L-methionine = N(3)-methylpseudouridine(1915) in 23S rRNA + S-adenosyl-L-homocysteine + H(+). Specifically methylates the pseudouridine at position 1915 (m3Psi1915) in 23S rRNA. This is Ribosomal RNA large subunit methyltransferase H from Brucella abortus biovar 1 (strain 9-941).